The chain runs to 124 residues: Small ribosomal subunit protein uS13 (124 aa).

Residues 99-124 (RGQRTRTNARTRKGPRKTVGVMRKKS) are disordered. Positions 101–124 (QRTRTNARTRKGPRKTVGVMRKKS) are enriched in basic residues.

Belongs to the universal ribosomal protein uS13 family. In terms of assembly, part of the 30S ribosomal subunit. Forms a loose heterodimer with protein S19. Forms two bridges to the 50S subunit in the 70S ribosome.

In terms of biological role, located at the top of the head of the 30S subunit, it contacts several helices of the 16S rRNA. In the 70S ribosome it contacts the 23S rRNA (bridge B1a) and protein L5 of the 50S subunit (bridge B1b), connecting the 2 subunits; these bridges are implicated in subunit movement. Contacts the tRNAs in the A and P-sites. The sequence is that of Small ribosomal subunit protein uS13 from Caldicellulosiruptor bescii (strain ATCC BAA-1888 / DSM 6725 / KCTC 15123 / Z-1320) (Anaerocellum thermophilum).